Reading from the N-terminus, the 119-residue chain is Large ribosomal subunit protein bL20 (119 aa).

The protein belongs to the bacterial ribosomal protein bL20 family.

Its function is as follows. Binds directly to 23S ribosomal RNA and is necessary for the in vitro assembly process of the 50S ribosomal subunit. It is not involved in the protein synthesizing functions of that subunit. The sequence is that of Large ribosomal subunit protein bL20 from Mycoplasma capricolum subsp. capricolum (strain California kid / ATCC 27343 / NCTC 10154).